A 257-amino-acid chain; its full sequence is Deoxyribose-phosphate aldolase (257 aa).

The active-site Proton donor/acceptor is Asp-102. Catalysis depends on Lys-166, which acts as the Schiff-base intermediate with acetaldehyde. Catalysis depends on Lys-198, which acts as the Proton donor/acceptor.

It belongs to the DeoC/FbaB aldolase family. DeoC type 2 subfamily.

The protein localises to the cytoplasm. The catalysed reaction is 2-deoxy-D-ribose 5-phosphate = D-glyceraldehyde 3-phosphate + acetaldehyde. The protein operates within carbohydrate degradation; 2-deoxy-D-ribose 1-phosphate degradation; D-glyceraldehyde 3-phosphate and acetaldehyde from 2-deoxy-alpha-D-ribose 1-phosphate: step 2/2. Functionally, catalyzes a reversible aldol reaction between acetaldehyde and D-glyceraldehyde 3-phosphate to generate 2-deoxy-D-ribose 5-phosphate. This is Deoxyribose-phosphate aldolase from Shewanella halifaxensis (strain HAW-EB4).